Consider the following 261-residue polypeptide: Indole-3-glycerol phosphate synthase (261 aa).

It belongs to the TrpC family.

The enzyme catalyses 1-(2-carboxyphenylamino)-1-deoxy-D-ribulose 5-phosphate + H(+) = (1S,2R)-1-C-(indol-3-yl)glycerol 3-phosphate + CO2 + H2O. Its pathway is amino-acid biosynthesis; L-tryptophan biosynthesis; L-tryptophan from chorismate: step 4/5. In Paraburkholderia phymatum (strain DSM 17167 / CIP 108236 / LMG 21445 / STM815) (Burkholderia phymatum), this protein is Indole-3-glycerol phosphate synthase.